Reading from the N-terminus, the 71-residue chain is Disintegrin horridistatin-2 (71 aa).

In terms of domain architecture, Disintegrin spans 1–71 (GEECDCGSPA…ADCPRNGLYG (71 aa)). 6 disulfides stabilise this stretch: C4-C19, C6-C14, C13-C36, C27-C33, C32-C57, and C45-C64. The Cell attachment site motif lies at 49–51 (RGD).

The protein belongs to the venom metalloproteinase (M12B) family. P-II subfamily. P-IIa sub-subfamily. In terms of assembly, monomer (disintegrin). Expressed by the venom gland.

The protein resides in the secreted. In terms of biological role, inhibits ADP-induced platelet aggregation (IC(50) is 16.2 nM) by binding to alpha-IIb/beta-3 (ITGA2B/ITGB3). The polypeptide is Disintegrin horridistatin-2 (Crotalus horridus (Timber rattlesnake)).